Here is a 169-residue protein sequence, read N- to C-terminus: Putative glycine cleavage system H protein, mitochondrial (169 aa).

The Lipoyl-binding domain maps to 60-142 (VGTVGITSYA…EEEGWICKIK (83 aa)). An N6-lipoyllysine modification is found at Lys101. Ser131 is subject to Phosphoserine.

The protein belongs to the GcvH family. Component of the glycine decarboxylase complex (GDC), which is composed of four proteins: P, T, L and H. The cofactor is (R)-lipoate.

The protein localises to the mitochondrion. In terms of biological role, the glycine cleavage system (glycine decarboxylase complex) catalyzes the degradation of glycine. The H protein shuttles the methylamine group of glycine from the P protein to the T protein. This is Putative glycine cleavage system H protein, mitochondrial (gcv3) from Schizosaccharomyces pombe (strain 972 / ATCC 24843) (Fission yeast).